Reading from the N-terminus, the 66-residue chain is MSQPLTVDCPTCGAPVEWSEKNAFRPFCSDRCKLIDLGAWAAEEHKIAGSEGSEDELYSGDLEPRH.

Zn(2+) is bound by residues Cys-9, Cys-12, Cys-28, and Cys-32. A disordered region spans residues 45–66 (HKIAGSEGSEDELYSGDLEPRH).

It belongs to the DNA gyrase inhibitor YacG family. As to quaternary structure, interacts with GyrB. Requires Zn(2+) as cofactor.

In terms of biological role, inhibits all the catalytic activities of DNA gyrase by preventing its interaction with DNA. Acts by binding directly to the C-terminal domain of GyrB, which probably disrupts DNA binding by the gyrase. In Pseudomonas putida (strain ATCC 700007 / DSM 6899 / JCM 31910 / BCRC 17059 / LMG 24140 / F1), this protein is DNA gyrase inhibitor YacG.